The primary structure comprises 180 residues: Nucleoside-triphosphatase THEP1 (180 aa).

Residues 18–25 (GRPGVGKT) and 104–111 (LVIMDEIG) each bind ATP.

The protein belongs to the THEP1 NTPase family.

It carries out the reaction a ribonucleoside 5'-triphosphate + H2O = a ribonucleoside 5'-diphosphate + phosphate + H(+). In terms of biological role, has nucleotide phosphatase activity towards ATP, GTP, CTP, TTP and UTP. May hydrolyze nucleoside diphosphates with lower efficiency. This Metallosphaera sedula (strain ATCC 51363 / DSM 5348 / JCM 9185 / NBRC 15509 / TH2) protein is Nucleoside-triphosphatase THEP1.